The chain runs to 315 residues: HPr kinase/phosphorylase (315 aa).

Residues His-140 and Lys-161 contribute to the active site. 155 to 162 is a binding site for ATP; sequence GDSGVGKS. A Mg(2+)-binding site is contributed by Ser-162. The active-site Proton acceptor; for phosphorylation activity. Proton donor; for dephosphorylation activity is the Asp-179. Residues 203–212 form an important for the catalytic mechanism of both phosphorylation and dephosphorylation region; sequence LEIRGIGIID. Glu-204 is a Mg(2+) binding site. Residue Arg-245 is part of the active site. The segment at 266–271 is important for the catalytic mechanism of dephosphorylation; it reads PVKTGR.

Belongs to the HPrK/P family. Homohexamer. The cofactor is Mg(2+).

The catalysed reaction is [HPr protein]-L-serine + ATP = [HPr protein]-O-phospho-L-serine + ADP + H(+). It catalyses the reaction [HPr protein]-O-phospho-L-serine + phosphate + H(+) = [HPr protein]-L-serine + diphosphate. Catalyzes the ATP- as well as the pyrophosphate-dependent phosphorylation of a specific serine residue in HPr, a phosphocarrier protein of the phosphoenolpyruvate-dependent sugar phosphotransferase system (PTS). HprK/P also catalyzes the pyrophosphate-producing, inorganic phosphate-dependent dephosphorylation (phosphorolysis) of seryl-phosphorylated HPr (P-Ser-HPr). The two antagonistic activities of HprK/P are regulated by several intracellular metabolites, which change their concentration in response to the absence or presence of rapidly metabolisable carbon sources (glucose, fructose, etc.) in the growth medium. Therefore, by controlling the phosphorylation state of HPr, HPrK/P is a sensor enzyme that plays a major role in the regulation of carbon metabolism and sugar transport: it mediates carbon catabolite repression (CCR), and regulates PTS-catalyzed carbohydrate uptake and inducer exclusion. In Lactiplantibacillus plantarum (strain ATCC BAA-793 / NCIMB 8826 / WCFS1) (Lactobacillus plantarum), this protein is HPr kinase/phosphorylase.